Here is a 37-residue protein sequence, read N- to C-terminus: Large ribosomal subunit protein bL36c (37 aa).

It belongs to the bacterial ribosomal protein bL36 family.

It is found in the plastid. The protein resides in the chloroplast. The chain is Large ribosomal subunit protein bL36c from Coffea arabica (Arabian coffee).